We begin with the raw amino-acid sequence, 652 residues long: RNA-binding KH domain-containing protein RCF3 (652 aa).

The span at 1-14 shows a compositional bias: basic and acidic residues; the sequence is MERSRSKRNYHYDQ. The interval 1–63 is disordered; that stretch reads MERSRSKRNY…NGRPSKSHPE (63 aa). The span at 34–55 shows a compositional bias: gly residues; it reads FGGGGGGNNRYRGGGGGGGGNG. KH domains are found at residues 67–139 and 175–245; these read TTTY…QEAL and RVVT…LAIV. The interval 253–307 is disordered; sequence QHRDRSNFQGRSHSPERSFAAAGDDYMPQLRRQSSDRFPRGNFRNNNFSSRQSNY. Residues 292-306 are compositionally biased toward low complexity; it reads RGNFRNNNFSSRQSN. 3 consecutive KH domains span residues 324-391, 408-476, and 576-640; these read ELVF…QEAL, LITT…LVEL, and RSTL…QSLL.

Homodimer. Interacts with CPL1. Interacts with RS40 and RS41. Interacts with DRB1/HYL1 and SE. Interacts with CPL2. As to expression, expressed in roots, cotyledons, leaves, flowers and siliques.

It is found in the nucleus. It localises to the nucleus speckle. Functionally, acts as a negative regulator of osmotic stress-induced gene expression. Involved in the regulation of thermotolerance responses under heat stress. Functions as an upstream regulator of heat stress transcription factor (HSF) genes. Negatively regulates HSFA1A, HSFA1B and HSFA1D, but positively controls the expression of HSFA1E, HSFA3, HSFA9, HSFB3, and DREB2C. Forms a complex with CPL1 that modulates co-transcriptional processes such as mRNA capping and polyadenylation, and functions to repress stress-inducible gene expression. Regulates pre-mRNA processing under salt stress. Involved in primary miRNA processing and pri-miRNA biogenesis. Binds both intronless and intron-containing pri-miRNAs. Acts as a regulator of biotic stress response gene expression and basal JA-mediated responses involved in defense. Acts as a negative regulator of resistance to the fungal pathogen Fusarium oxysporum. The chain is RNA-binding KH domain-containing protein RCF3 from Arabidopsis thaliana (Mouse-ear cress).